Reading from the N-terminus, the 94-residue chain is Putative pterin-4-alpha-carbinolamine dehydratase (94 aa).

Belongs to the pterin-4-alpha-carbinolamine dehydratase family.

The enzyme catalyses (4aS,6R)-4a-hydroxy-L-erythro-5,6,7,8-tetrahydrobiopterin = (6R)-L-erythro-6,7-dihydrobiopterin + H2O. The sequence is that of Putative pterin-4-alpha-carbinolamine dehydratase from Mycobacteroides abscessus (strain ATCC 19977 / DSM 44196 / CCUG 20993 / CIP 104536 / JCM 13569 / NCTC 13031 / TMC 1543 / L948) (Mycobacterium abscessus).